A 269-amino-acid polypeptide reads, in one-letter code: Cyclic AMP-dependent transcription factor ATF-1 (269 aa).

The disordered stretch occupies residues 1 to 90 (MEDSHKSNTT…GEGENPSISA (90 aa)). The segment covering 9–18 (TTETASQPGS) has biased composition (polar residues). Positions 31-90 (QVSSLSESEESQDSSDSIGSSQKAHGILARRPSYRKILKDLSSEDTRGRKGEGENPSISA) constitute a KID domain. The residue at position 63 (serine 63) is a Phosphoserine; by CaMK1, CDK3, RPS6KA4 and RPS6KA5. The segment covering 67-83 (ILKDLSSEDTRGRKGEG) has biased composition (basic and acidic residues). Serine 196 carries the phosphoserine; by HIPK2 modification. Lysine 206 participates in a covalent cross-link: Glycyl lysine isopeptide (Lys-Gly) (interchain with G-Cter in SUMO2). Residues 211–269 (QLRREIRLMKNREAARECRRKKKEYVKCLENRVAVLENQNKTLIEELKTLKDLYSHKSV) enclose the bZIP domain. Residues 213–237 (RREIRLMKNREAARECRRKKKEYVK) are basic motif. Positions 239-260 (LENRVAVLENQNKTLIEELKTL) are leucine-zipper.

Belongs to the bZIP family. ATF subfamily. In terms of assembly, binds DNA as a dimer. Interacts with HIPK2 and CDK3. Interacts with MOTS-c, a peptide produced by the mitochondrially encoded 12S rRNA MT-RNR1; the interaction occurs in the nucleus following metabolic stress. Post-translationally, phosphorylated at Ser-196 by HIPK2 in response to genotoxic stress. This phosphorylation promotes transcription repression of FTH1 and other antioxidant detoxification genes. The CDK3-mediated phosphorylation at Ser-63 promotes its transactivation and transcriptional activities. Phosphorylated at Ser-63 by RPS6KA4 and RPS6KA5 in response to mitogenic or stress stimuli.

Its subcellular location is the nucleus. Its function is as follows. Binds the cAMP response element (CRE) (consensus: 5'-GTGACGT[AC][AG]-3'), a sequence present in many viral and cellular promoters. Binds to the Tax-responsive element (TRE) of HTLV-I. Mediates PKA-induced stimulation of CRE-reporter genes. Represses the expression of FTH1 and other antioxidant detoxification genes. Triggers cell proliferation and transformation. The sequence is that of Cyclic AMP-dependent transcription factor ATF-1 (Atf1) from Mus musculus (Mouse).